The primary structure comprises 616 residues: Chaperone protein HscA (616 aa).

Belongs to the heat shock protein 70 family.

Its function is as follows. Chaperone involved in the maturation of iron-sulfur cluster-containing proteins. Has a low intrinsic ATPase activity which is markedly stimulated by HscB. Involved in the maturation of IscU. In Shigella flexneri serotype 5b (strain 8401), this protein is Chaperone protein HscA.